The sequence spans 249 residues: tRNA (guanine-N(1)-)-methyltransferase (249 aa).

Residues glycine 116 and 136–141 (IGDYIL) each bind S-adenosyl-L-methionine.

Belongs to the RNA methyltransferase TrmD family. In terms of assembly, homodimer.

The protein resides in the cytoplasm. It carries out the reaction guanosine(37) in tRNA + S-adenosyl-L-methionine = N(1)-methylguanosine(37) in tRNA + S-adenosyl-L-homocysteine + H(+). Functionally, specifically methylates guanosine-37 in various tRNAs. The chain is tRNA (guanine-N(1)-)-methyltransferase from Zymomonas mobilis subsp. mobilis (strain ATCC 31821 / ZM4 / CP4).